The primary structure comprises 122 residues: Large ribosomal subunit protein uL14c (122 aa).

The protein belongs to the universal ribosomal protein uL14 family. Part of the 50S ribosomal subunit.

Its subcellular location is the plastid. The protein localises to the chloroplast. In terms of biological role, binds to 23S rRNA. The chain is Large ribosomal subunit protein uL14c from Morus indica (Mulberry).